The sequence spans 490 residues: Myocilin (490 aa).

The N-terminal stretch at 1-18 (MPATQLLLLACLVWGLGA) is a signal peptide. An N-linked (GlcNAc...) asparagine glycan is attached at N43. Positions 52 to 169 (QAMSAIQDLQ…SQEVARLRRG (118 aa)) form a coiled coil. The segment covering 146-157 (REENEDLARRLD) has biased composition (basic and acidic residues). The tract at residues 146-188 (REENEDLARRLDSSSQEVARLRRGQCPQARGTPQDVPSGSREV) is disordered. An Olfactomedin-like domain is found at 230–489 (GCGELVWVGE…MVTYDLRLSE (260 aa)). C231 and C419 are oxidised to a cystine. Positions 366, 414, 415, 463, and 464 each coordinate Ca(2+). The Microbody targeting signal signature appears at 488–490 (SEM).

As to quaternary structure, homodimer (via N-terminus). Can also form higher oligomers. Interacts with OLFM3, FN1, NRCAM, GLDN and NFASC. Interacts (via N-terminus) with MYL2. Interacts with SFRP1, FRZB, FZD7, FZD10, FZD1 and WIF1; regulates Wnt signaling. Interacts with SNTA1; regulates muscle hypertrophy. Interacts with ERBB2 and ERBB3; activates ERBB2-ERBB3 signaling pathway. Interacts with SNCG; affects its secretion and its aggregation. In terms of processing, palmitoylated. Post-translationally, undergoes a calcium-dependent proteolytic cleavage at Arg-212 by CAPN2 in the endoplasmic reticulum. The result is the production of two fragments, one of 35 kDa containing the C-terminal olfactomedin-like domain, and another of 20 kDa containing the N-terminal leucine zipper-like domain. Glycosylated. Expressed in optic nerve head, ciliary body and retina.

It is found in the secreted. The protein resides in the golgi apparatus. It localises to the cytoplasmic vesicle. Its subcellular location is the extracellular space. The protein localises to the extracellular matrix. It is found in the extracellular exosome. The protein resides in the mitochondrion. It localises to the mitochondrion intermembrane space. Its subcellular location is the mitochondrion inner membrane. The protein localises to the mitochondrion outer membrane. It is found in the rough endoplasmic reticulum. The protein resides in the cell projection. It localises to the cilium. Its subcellular location is the endoplasmic reticulum. In terms of biological role, secreted glycoprotein regulating the activation of different signaling pathways in adjacent cells to control different processes including cell adhesion, cell-matrix adhesion, cytoskeleton organization and cell migration. Promotes substrate adhesion, spreading and formation of focal contacts. Negatively regulates cell-matrix adhesion and stress fiber assembly through Rho protein signal transduction. Modulates the organization of actin cytoskeleton by stimulating the formation of stress fibers through interactions with components of Wnt signaling pathways. Promotes cell migration through activation of PTK2 and the downstream phosphatidylinositol 3-kinase signaling. Plays a role in bone formation and promotes osteoblast differentiation in a dose-dependent manner through mitogen-activated protein kinase signaling. Mediates myelination in the peripheral nervous system through ERBB2/ERBB3 signaling. Plays a role as a regulator of muscle hypertrophy through the components of dystrophin-associated protein complex. Involved in positive regulation of mitochondrial depolarization. Plays a role in neurite outgrowth. May participate in the obstruction of fluid outflow in the trabecular meshwork. This is Myocilin (MYOC) from Felis catus (Cat).